The chain runs to 235 residues: Probable WRKY transcription factor 66 (235 aa).

The WRKY DNA-binding region spans 79–147; that stretch reads SPTPAHIDGF…YVGQHACEAP (69 aa).

Belongs to the WRKY group III family.

It is found in the nucleus. Transcription factor. Interacts specifically with the W box (5'-(T)TGAC[CT]-3'), a frequently occurring elicitor-responsive cis-acting element. The protein is Probable WRKY transcription factor 66 (WRKY66) of Arabidopsis thaliana (Mouse-ear cress).